We begin with the raw amino-acid sequence, 238 residues long: Dolichyldiphosphatase 1 (238 aa).

Transmembrane regions (helical) follow at residues 33–53 (LAYL…LIIF), 100–120 (PSSH…FLYL), 130–150 (FLDL…AFLV), and 162–182 (WSQV…WFIF).

This sequence belongs to the dolichyldiphosphatase family.

It is found in the endoplasmic reticulum membrane. The enzyme catalyses a di-trans,poly-cis-dolichyl diphosphate + H2O = a di-trans,poly-cis-dolichyl phosphate + phosphate + H(+). It participates in protein modification; protein glycosylation. Its function is as follows. Required for efficient N-glycosylation. Necessary for maintaining optimal levels of dolichol-linked oligosaccharides. Hydrolyzes dolichyl pyrophosphate at a very high rate and dolichyl monophosphate at a much lower rate. Does not act on phosphatidate. This is Dolichyldiphosphatase 1 (DOLPP1) from Plecturocebus moloch (Dusky titi monkey).